Here is a 463-residue protein sequence, read N- to C-terminus: Major capsid protein (463 aa).

The protein belongs to the NCLDV major capsid protein family. In terms of assembly, homotrimer.

It is found in the virion. In terms of biological role, major capsid protein that self assembles to form an icosahedral capsid. Represents around 50% of the total virion protein mass. The chain is Major capsid protein (MCP) from Rana tigrina ranavirus.